Consider the following 160-residue polypeptide: SsrA-binding protein (160 aa).

Belongs to the SmpB family.

Its subcellular location is the cytoplasm. Required for rescue of stalled ribosomes mediated by trans-translation. Binds to transfer-messenger RNA (tmRNA), required for stable association of tmRNA with ribosomes. tmRNA and SmpB together mimic tRNA shape, replacing the anticodon stem-loop with SmpB. tmRNA is encoded by the ssrA gene; the 2 termini fold to resemble tRNA(Ala) and it encodes a 'tag peptide', a short internal open reading frame. During trans-translation Ala-aminoacylated tmRNA acts like a tRNA, entering the A-site of stalled ribosomes, displacing the stalled mRNA. The ribosome then switches to translate the ORF on the tmRNA; the nascent peptide is terminated with the 'tag peptide' encoded by the tmRNA and targeted for degradation. The ribosome is freed to recommence translation, which seems to be the essential function of trans-translation. This is SsrA-binding protein from Haemophilus ducreyi (strain 35000HP / ATCC 700724).